A 384-amino-acid chain; its full sequence is Cell division protein FtsZ (384 aa).

Residues 20–24 (GGGGN), 107–109 (GTG), Glu138, Arg142, and Asn186 each bind GTP.

Belongs to the FtsZ family. In terms of assembly, homodimer. Polymerizes to form a dynamic ring structure in a strictly GTP-dependent manner. Interacts directly with several other division proteins.

Its subcellular location is the cytoplasm. Essential cell division protein that forms a contractile ring structure (Z ring) at the future cell division site. The regulation of the ring assembly controls the timing and the location of cell division. One of the functions of the FtsZ ring is to recruit other cell division proteins to the septum to produce a new cell wall between the dividing cells. Binds GTP and shows GTPase activity. This is Cell division protein FtsZ from Buchnera aphidicola subsp. Schizaphis graminum (strain Sg).